Consider the following 465-residue polypeptide: Argininosuccinate lyase (465 aa).

The protein belongs to the lyase 1 family. Argininosuccinate lyase subfamily.

The protein localises to the cytoplasm. It carries out the reaction 2-(N(omega)-L-arginino)succinate = fumarate + L-arginine. Its pathway is amino-acid biosynthesis; L-arginine biosynthesis; L-arginine from L-ornithine and carbamoyl phosphate: step 3/3. This Clostridium botulinum (strain Alaska E43 / Type E3) protein is Argininosuccinate lyase.